Consider the following 415-residue polypeptide: Serine hydroxymethyltransferase (415 aa).

(6S)-5,6,7,8-tetrahydrofolate contacts are provided by residues Leu119 and 123–125; that span reads GHL. The residue at position 228 (Lys228) is an N6-(pyridoxal phosphate)lysine.

This sequence belongs to the SHMT family. As to quaternary structure, homodimer. Pyridoxal 5'-phosphate is required as a cofactor.

It is found in the cytoplasm. The enzyme catalyses (6R)-5,10-methylene-5,6,7,8-tetrahydrofolate + glycine + H2O = (6S)-5,6,7,8-tetrahydrofolate + L-serine. The protein operates within one-carbon metabolism; tetrahydrofolate interconversion. Its pathway is amino-acid biosynthesis; glycine biosynthesis; glycine from L-serine: step 1/1. Its function is as follows. Catalyzes the reversible interconversion of serine and glycine with tetrahydrofolate (THF) serving as the one-carbon carrier. This reaction serves as the major source of one-carbon groups required for the biosynthesis of purines, thymidylate, methionine, and other important biomolecules. Also exhibits THF-independent aldolase activity toward beta-hydroxyamino acids, producing glycine and aldehydes, via a retro-aldol mechanism. The chain is Serine hydroxymethyltransferase from Coprothermobacter proteolyticus (strain ATCC 35245 / DSM 5265 / OCM 4 / BT).